Reading from the N-terminus, the 1036-residue chain is Phospholipase D1 (1036 aa).

A PX domain is found at 81–212 (IKAQVLEVER…TEFLDVSQLS (132 aa)). Positions 219 to 328 (PKGLEGMIMK…WGGAIEEFIQ (110 aa)) constitute a PH domain. S-palmitoyl cysteine attachment occurs at residues Cys-240 and Cys-241. A PLD phosphodiesterase 1 domain is found at 459–486 (YLWAHHEKLVIIDQSVAFVGGIDLAYGR). The segment at 463-890 (HHEKLVIIDQ…MLGKRDSEMA (428 aa)) is catalytic. 3 positions are modified to phosphoserine: Ser-499, Ser-561, and Ser-591. The region spanning 853-880 (ELIYVHSKLLIADDNTVIIGSANINDRS) is the PLD phosphodiesterase 2 domain.

This sequence belongs to the phospholipase D family. As to quaternary structure, interacts with PIP5K1B.

It is found in the cytoplasm. Its subcellular location is the perinuclear region. The protein localises to the endoplasmic reticulum membrane. The protein resides in the golgi apparatus membrane. It localises to the late endosome membrane. It carries out the reaction a 1,2-diacyl-sn-glycero-3-phosphocholine + H2O = a 1,2-diacyl-sn-glycero-3-phosphate + choline + H(+). With respect to regulation, stimulated by phosphatidylinositol 4,5-bisphosphate and phosphatidylinositol 3,4,5-trisphosphate, activated by the phosphokinase C-alpha, by the ADP-ribosylation factor-1 (ARF-1), and to a lesser extent by GTP-binding proteins: RHO A, RAC-1 and CDC42. Its function is as follows. Implicated as a critical step in numerous cellular pathways, including signal transduction, membrane trafficking, and the regulation of mitosis. May be involved in the regulation of perinuclear intravesicular membrane traffic. In Cricetulus griseus (Chinese hamster), this protein is Phospholipase D1 (PLD1).